The following is a 428-amino-acid chain: Serine--tRNA ligase (428 aa).

235–237 (TAE) provides a ligand contact to L-serine. 266–268 (RSE) provides a ligand contact to ATP. Glutamate 289 provides a ligand contact to L-serine. 353–356 (EISS) serves as a coordination point for ATP. Serine 389 is a binding site for L-serine.

It belongs to the class-II aminoacyl-tRNA synthetase family. Type-1 seryl-tRNA synthetase subfamily. As to quaternary structure, homodimer. The tRNA molecule binds across the dimer.

The protein localises to the cytoplasm. The enzyme catalyses tRNA(Ser) + L-serine + ATP = L-seryl-tRNA(Ser) + AMP + diphosphate + H(+). The catalysed reaction is tRNA(Sec) + L-serine + ATP = L-seryl-tRNA(Sec) + AMP + diphosphate + H(+). It functions in the pathway aminoacyl-tRNA biosynthesis; selenocysteinyl-tRNA(Sec) biosynthesis; L-seryl-tRNA(Sec) from L-serine and tRNA(Sec): step 1/1. Functionally, catalyzes the attachment of serine to tRNA(Ser). Is also able to aminoacylate tRNA(Sec) with serine, to form the misacylated tRNA L-seryl-tRNA(Sec), which will be further converted into selenocysteinyl-tRNA(Sec). The chain is Serine--tRNA ligase from Shewanella sp. (strain ANA-3).